The sequence spans 172 residues: Translation initiation factor IF-3 (172 aa).

Belongs to the IF-3 family. Monomer.

It localises to the cytoplasm. In terms of biological role, IF-3 binds to the 30S ribosomal subunit and shifts the equilibrium between 70S ribosomes and their 50S and 30S subunits in favor of the free subunits, thus enhancing the availability of 30S subunits on which protein synthesis initiation begins. The chain is Translation initiation factor IF-3 from Thermotoga maritima (strain ATCC 43589 / DSM 3109 / JCM 10099 / NBRC 100826 / MSB8).